We begin with the raw amino-acid sequence, 393 residues long: Protein FAM47E (393 aa).

Residues 326 to 354 (VSHKAQEENFKKELQEQEELLADLHGTVA) adopt a coiled-coil conformation.

The protein belongs to the FAM47 family. Interacts with PRMT5; the interaction is direct. Interacts with WDR77.

It localises to the nucleus. The protein localises to the chromosome. Its subcellular location is the cytoplasm. Functionally, promotes histone methylation by localizing the arginine methyltransferase PRMT5 to chromatin. The protein is Protein FAM47E (FAM47E) of Homo sapiens (Human).